A 300-amino-acid chain; its full sequence is Cation-efflux pump FieF (300 aa).

The next 4 helical transmembrane spans lie at 12 to 32, 39 to 59, 82 to 102, and 114 to 134; these read AAIA…FAWW, ILAA…NLLV, AALA…LTGI, and PGVG…LVSF. Zn(2+) contacts are provided by D45 and D49. Zn(2+) contacts are provided by H153 and D157. The next 2 helical transmembrane spans lie at 156–176 and 178–198; these read SDVM…YGWH and ADAL…LRMG.

Belongs to the cation diffusion facilitator (CDF) transporter (TC 2.A.4) family. FieF subfamily. As to quaternary structure, homodimer.

Its subcellular location is the cell inner membrane. The catalysed reaction is Zn(2+)(in) + H(+)(out) = Zn(2+)(out) + H(+)(in). The enzyme catalyses Cd(2+)(in) + H(+)(out) = Cd(2+)(out) + H(+)(in). It carries out the reaction Fe(2+)(in) + H(+)(out) = Fe(2+)(out) + H(+)(in). Divalent metal cation transporter which exports Zn(2+), Cd(2+) and possibly Fe(2+). May be involved in zinc and iron detoxification by efflux. The polypeptide is Cation-efflux pump FieF (Escherichia coli O127:H6 (strain E2348/69 / EPEC)).